Consider the following 138-residue polypeptide: ATP synthase epsilon chain (138 aa).

Belongs to the ATPase epsilon chain family. F-type ATPases have 2 components, CF(1) - the catalytic core - and CF(0) - the membrane proton channel. CF(1) has five subunits: alpha(3), beta(3), gamma(1), delta(1), epsilon(1). CF(0) has three main subunits: a, b and c.

It localises to the cell inner membrane. Its function is as follows. Produces ATP from ADP in the presence of a proton gradient across the membrane. The chain is ATP synthase epsilon chain from Psychrobacter cryohalolentis (strain ATCC BAA-1226 / DSM 17306 / VKM B-2378 / K5).